Consider the following 514-residue polypeptide: Cobyric acid synthase (514 aa).

In terms of domain architecture, GATase cobBQ-type spans 258 to 458 (ALMVGVVRLP…IHGIFDNDGL (201 aa)). The active-site Nucleophile is cysteine 339. Histidine 450 is a catalytic residue.

Belongs to the CobB/CobQ family. CobQ subfamily.

The protein operates within cofactor biosynthesis; adenosylcobalamin biosynthesis. In terms of biological role, catalyzes amidations at positions B, D, E, and G on adenosylcobyrinic A,C-diamide. NH(2) groups are provided by glutamine, and one molecule of ATP is hydrogenolyzed for each amidation. This chain is Cobyric acid synthase, found in Syntrophobacter fumaroxidans (strain DSM 10017 / MPOB).